Consider the following 2193-residue polypeptide: Genome polyprotein (2193 aa).

The N-myristoyl glycine; by host moiety is linked to residue G2. The Cytoplasmic portion of the chain corresponds to 2–1503 (GAQVSTQKTG…HVSRAFICLQ (1502 aa)). Positions 567–583 (ELQSDVREAVEGAIGRV) are amphipathic alpha-helix. Residues H880 and D898 each act as for protease 2A activity in the active site. C915 and C917 together coordinate Zn(2+). The active-site For protease 2A activity is C969. Positions 975 and 977 each coordinate Zn(2+). The interval 1109–1181 (NNRWLKKFTE…EQSAPSQGDQ (73 aa)) is membrane-binding. The oligomerization stretch occupies residues 1109–1247 (NNRWLKKFTE…SPGAGKSVAT (139 aa)). The RNA-binding stretch occupies residues 1130–1134 (AIKIQ). Positions 1213 to 1369 (EKKMSNYIQF…SMYSQNGKIN (157 aa)) constitute an SF3 helicase domain. Residues C1377, C1389, and C1394 each coordinate Zn(2+). The C4-type; degenerate zinc finger occupies 1377-1394 (CDEECCPVNFKKCCPLVC). The RNA-binding stretch occupies residues 1421 to 1428 (EYNHRHSV). Residues 1432-1437 (LEALFQ) are oligomerization. Residues 1504–1519 (ALTTFVSVAGIIYIIY) lie within the membrane without spanning it. Residues 1520 to 2193 (KLFAGFQGAY…TLRRKWLDSF (674 aa)) are Cytoplasmic-facing. Y1529 is subject to O-(5'-phospho-RNA)-tyrosine. The 179-residue stretch at 1549–1727 (GPAFEFAVAM…FSAALLKHYF (179 aa)) folds into the Peptidase C3 domain. Catalysis depends on for protease 3C activity residues H1588, E1619, and C1695. One can recognise a RdRp catalytic domain in the interval 1958–2074 (GHLIAFDYSG…SYPWPIDASL (117 aa)). Residues D1964 and D2060 each contribute to the Mg(2+) site.

The protein belongs to the picornaviruses polyprotein family. Interacts with capsid protein VP1 and capsid protein VP3 to form heterotrimeric protomers. In terms of assembly, interacts with capsid protein VP0, and capsid protein VP3 to form heterotrimeric protomers. Five protomers subsequently associate to form pentamers which serve as building blocks for the capsid. Interacts with capsid protein VP2, capsid protein VP3 and capsid protein VP4 following cleavage of capsid protein VP0. As to quaternary structure, interacts with capsid protein VP1 and capsid protein VP3 in the mature capsid. Interacts with capsid protein VP0 and capsid protein VP1 to form heterotrimeric protomers. Five protomers subsequently associate to form pentamers which serve as building blocks for the capsid. Interacts with capsid protein VP4 in the mature capsid. Interacts with protein 2C; this interaction may be important for virion morphogenesis. In terms of assembly, interacts with capsid protein VP1 and capsid protein VP3. As to quaternary structure, homodimer. Homohexamer; forms a hexameric ring structure with 6-fold symmetry characteristic of AAA+ ATPases. Interacts (via N-terminus) with host RTN3 (via reticulon domain); this interaction is important for viral replication. Interacts with capsid protein VP3; this interaction may be important for virion morphogenesis. In terms of assembly, interacts with protein 3CD. As to quaternary structure, homodimer. Interacts with host GBF1. Interacts (via GOLD domain) with host ACBD3 (via GOLD domain); this interaction allows the formation of a viral protein 3A/ACBD3 heterotetramer with a 2:2 stoichiometry, which will stimulate the recruitment of host PI4KB in order to synthesize PI4P at the viral RNA replication sites. Interacts with RNA-directed RNA polymerase. In terms of assembly, interacts with protein 3AB and with RNA-directed RNA polymerase. As to quaternary structure, interacts with Viral protein genome-linked and with protein 3CD. The cofactor is Mg(2+). Post-translationally, specific enzymatic cleavages in vivo by the viral proteases yield processing intermediates and the mature proteins. In terms of processing, myristoylation is required for the formation of pentamers during virus assembly. Further assembly of 12 pentamers and a molecule of genomic RNA generates the provirion. During virion maturation, immature virions are rendered infectious following cleavage of VP0 into VP4 and VP2. This maturation seems to be an autocatalytic event triggered by the presence of RNA in the capsid and it is followed by a conformational change infectious virion. Post-translationally, myristoylation is required during RNA encapsidation and formation of the mature virus particle. In terms of processing, VPg is uridylylated by the polymerase into VPg-pUpU. This acts as a nucleotide-peptide primer for the genomic RNA replication.

It localises to the virion. It is found in the host cytoplasm. The protein resides in the host cytoplasmic vesicle membrane. The protein localises to the host nucleus. It carries out the reaction a ribonucleoside 5'-triphosphate + H2O = a ribonucleoside 5'-diphosphate + phosphate + H(+). It catalyses the reaction Selective cleavage of Tyr-|-Gly bond in the picornavirus polyprotein.. The enzyme catalyses RNA(n) + a ribonucleoside 5'-triphosphate = RNA(n+1) + diphosphate. The catalysed reaction is Selective cleavage of Gln-|-Gly bond in the poliovirus polyprotein. In other picornavirus reactions Glu may be substituted for Gln, and Ser or Thr for Gly.. Replication or transcription is subject to high level of random mutations by the nucleotide analog ribavirin. Its function is as follows. Forms an icosahedral capsid of pseudo T=3 symmetry with capsid proteins VP2 and VP3. The capsid is 300 Angstroms in diameter, composed of 60 copies of each capsid protein and enclosing the viral positive strand RNA genome. Capsid protein VP1 mainly forms the vertices of the capsid. Capsid protein VP1 interacts with host cell receptor to provide virion attachment to target host cells. This attachment induces virion internalization. Tyrosine kinases are probably involved in the entry process. After binding to its receptor, the capsid undergoes conformational changes. Capsid protein VP1 N-terminus (that contains an amphipathic alpha-helix) and capsid protein VP4 are externalized. Together, they shape a pore in the host membrane through which viral genome is translocated to host cell cytoplasm. Functionally, forms an icosahedral capsid of pseudo T=3 symmetry with capsid proteins VP2 and VP3. The capsid is 300 Angstroms in diameter, composed of 60 copies of each capsid protein and enclosing the viral positive strand RNA genome. Lies on the inner surface of the capsid shell. After binding to the host receptor, the capsid undergoes conformational changes. Capsid protein VP4 is released, Capsid protein VP1 N-terminus is externalized, and together, they shape a pore in the host membrane through which the viral genome is translocated into the host cell cytoplasm. In terms of biological role, component of immature procapsids, which is cleaved into capsid proteins VP4 and VP2 after maturation. Allows the capsid to remain inactive before the maturation step. Its function is as follows. Cysteine protease that cleaves viral polyprotein and specific host proteins. It is responsible for the autocatalytic cleavage between the P1 and P2 regions, which is the first cleavage occurring in the polyprotein. Also cleaves the host translation initiation factor EIF4G1, in order to shut down the capped cellular mRNA translation. Inhibits the host nucleus-cytoplasm protein and RNA trafficking by cleaving host members of the nuclear pores. Counteracts stress granule formation probably by antagonizing its assembly or promoting its dissassembly. Functionally, plays an essential role in the virus replication cycle by acting as a viroporin. Creates a pore in the host endoplasmic reticulum and as a consequence releases Ca2+ in the cytoplasm of infected cell. In turn, high levels of cytoplasmic calcium may trigger membrane trafficking and transport of viral ER-associated proteins to viroplasms, sites of viral genome replication. Induces and associates with structural rearrangements of intracellular membranes. Displays RNA-binding, nucleotide binding and NTPase activities. May play a role in virion morphogenesis and viral RNA encapsidation by interacting with the capsid protein VP3. In terms of biological role, localizes the viral replication complex to the surface of membranous vesicles. Together with protein 3CD binds the Cis-Active RNA Element (CRE) which is involved in RNA synthesis initiation. Acts as a cofactor to stimulate the activity of 3D polymerase, maybe through a nucleid acid chaperone activity. Its function is as follows. Localizes the viral replication complex to the surface of membranous vesicles. It inhibits host cell endoplasmic reticulum-to-Golgi apparatus transport and causes the disassembly of the Golgi complex, possibly through GBF1 interaction. This would result in depletion of MHC, trail receptors and IFN receptors at the host cell surface. Plays an essential role in viral RNA replication by recruiting ACBD3 and PI4KB at the viral replication sites, thereby allowing the formation of the rearranged membranous structures where viral replication takes place. Functionally, acts as a primer for viral RNA replication and remains covalently bound to viral genomic RNA. VPg is uridylylated prior to priming replication into VPg-pUpU. The oriI viral genomic sequence may act as a template for this. The VPg-pUpU is then used as primer on the genomic RNA poly(A) by the RNA-dependent RNA polymerase to replicate the viral genome. During genome replication, the VPg-RNA linkage is removed by the host TDP2, thereby accelerating replication. During the late stage of the replication cycle, host TDP2 is excluded from sites of viral RNA synthesis and encapsidation, allowing for the generation of progeny virions. Involved in the viral replication complex and viral polypeptide maturation. It exhibits protease activity with a specificity and catalytic efficiency that is different from protease 3C. Protein 3CD lacks polymerase activity. Protein 3CD binds to the 5'UTR of the viral genome. In terms of biological role, replicates the viral genomic RNA on the surface of intracellular membranes. May form linear arrays of subunits that propagate along a strong head-to-tail interaction called interface-I. Covalently attaches UMP to a tyrosine of VPg, which is used to prime RNA synthesis. The positive stranded RNA genome is first replicated at virus induced membranous vesicles, creating a dsRNA genomic replication form. This dsRNA is then used as template to synthesize positive stranded RNA genomes. ss(+)RNA genomes are either translated, replicated or encapsidated. Its function is as follows. Major viral protease that mediates proteolytic processing of the polyprotein. Cleaves host EIF5B, contributing to host translation shutoff. Also cleaves host PABPC1, contributing to host translation shutoff. Cleaves host NLRP1, triggers host N-glycine-mediated degradation of the autoinhibitory NLRP1 N-terminal fragment. This Echovirus 9 (strain Hill) protein is Genome polyprotein.